The following is a 131-amino-acid chain: uncharacterized protein (131 aa).

The segment at 112-131 is disordered; that stretch reads LTDNPGAVRKSQKSLIPPYN.

This is an uncharacterized protein from Fowl adenovirus A serotype 1 (strain CELO / Phelps) (FAdV-1).